The chain runs to 212 residues: Large ribosomal subunit protein uL3 (212 aa).

The segment at 119 to 147 (YQGNIKRWGQSRGPETHGSRYHRIPGSMG) is disordered.

This sequence belongs to the universal ribosomal protein uL3 family. In terms of assembly, part of the 50S ribosomal subunit. Forms a cluster with proteins L14 and L19.

Its function is as follows. One of the primary rRNA binding proteins, it binds directly near the 3'-end of the 23S rRNA, where it nucleates assembly of the 50S subunit. The protein is Large ribosomal subunit protein uL3 of Lactobacillus acidophilus (strain ATCC 700396 / NCK56 / N2 / NCFM).